The following is a 147-amino-acid chain: MNNPDDVLLINRFLRQQHVLTLCAGSGMDMWCASCFYVFDENQMALFLMTEKHTRHSELMLINPQVAGTVATQSRTIALIKGIQYRGEISLLSGDAEQAARNRYCRRFPVAKVSSAPLWQLNLLEIKMTNNALGFGKKLHWSRVEPL.

This sequence belongs to the UPF0306 family.

This Yersinia pestis bv. Antiqua (strain Angola) protein is UPF0306 protein YpAngola_A4021.